Here is a 357-residue protein sequence, read N- to C-terminus: Alanine racemase (357 aa).

The Proton acceptor; specific for D-alanine role is filled by Lys35. Lys35 bears the N6-(pyridoxal phosphate)lysine mark. Arg128 lines the substrate pocket. Tyr254 (proton acceptor; specific for L-alanine) is an active-site residue. Residue Met302 participates in substrate binding.

This sequence belongs to the alanine racemase family. Pyridoxal 5'-phosphate is required as a cofactor.

It carries out the reaction L-alanine = D-alanine. It functions in the pathway amino-acid biosynthesis; D-alanine biosynthesis; D-alanine from L-alanine: step 1/1. In terms of biological role, catalyzes the interconversion of L-alanine and D-alanine. May also act on other amino acids. This chain is Alanine racemase (alr), found in Marinobacter nauticus (strain ATCC 700491 / DSM 11845 / VT8) (Marinobacter aquaeolei).